A 729-amino-acid chain; its full sequence is Fatty acid oxidation complex subunit alpha (729 aa).

The tract at residues 1 to 189 is enoyl-CoA hydratase/isomerase; that stretch reads MLYQGETLQL…KVGLVDAVVA (189 aa). A substrate-binding site is contributed by Asp296. Residues 311–729 form a 3-hydroxyacyl-CoA dehydrogenase region; the sequence is EAPKQAAVLG…LSDVSTGQPA (419 aa). Residues Met324, Asp343, 400-402, Lys407, and Ser429 each bind NAD(+); that span reads VVE. His450 serves as the catalytic For 3-hydroxyacyl-CoA dehydrogenase activity. NAD(+) is bound at residue Asn453. Asn500 and Tyr660 together coordinate substrate.

In the N-terminal section; belongs to the enoyl-CoA hydratase/isomerase family. The protein in the C-terminal section; belongs to the 3-hydroxyacyl-CoA dehydrogenase family. Heterotetramer of two alpha chains (FadB) and two beta chains (FadA).

It carries out the reaction a (3S)-3-hydroxyacyl-CoA + NAD(+) = a 3-oxoacyl-CoA + NADH + H(+). The catalysed reaction is a (3S)-3-hydroxyacyl-CoA = a (2E)-enoyl-CoA + H2O. The enzyme catalyses a 4-saturated-(3S)-3-hydroxyacyl-CoA = a (3E)-enoyl-CoA + H2O. It catalyses the reaction (3S)-3-hydroxybutanoyl-CoA = (3R)-3-hydroxybutanoyl-CoA. It carries out the reaction a (3Z)-enoyl-CoA = a 4-saturated (2E)-enoyl-CoA. The catalysed reaction is a (3E)-enoyl-CoA = a 4-saturated (2E)-enoyl-CoA. The protein operates within lipid metabolism; fatty acid beta-oxidation. Involved in the aerobic and anaerobic degradation of long-chain fatty acids via beta-oxidation cycle. Catalyzes the formation of 3-oxoacyl-CoA from enoyl-CoA via L-3-hydroxyacyl-CoA. It can also use D-3-hydroxyacyl-CoA and cis-3-enoyl-CoA as substrate. This Serratia proteamaculans (strain 568) protein is Fatty acid oxidation complex subunit alpha.